We begin with the raw amino-acid sequence, 240 residues long: Ribosomal RNA small subunit methyltransferase G (240 aa).

S-adenosyl-L-methionine is bound by residues glycine 79, 130-131 (AE), and arginine 149.

The protein belongs to the methyltransferase superfamily. RNA methyltransferase RsmG family.

It localises to the cytoplasm. Its function is as follows. Specifically methylates the N7 position of a guanine in 16S rRNA. This Moorella thermoacetica (strain ATCC 39073 / JCM 9320) protein is Ribosomal RNA small subunit methyltransferase G.